The chain runs to 95 residues: SMAD5 antisense gene protein 1 (95 aa).

Disordered regions lie at residues 1-24 and 43-70; these read MHKQPKLLPPPATPPPPPQSSSWS and SSPTGLPKPHSPMPSPPEPEHSVGKPAN. Residues 7 to 19 are compositionally biased toward pro residues; the sequence is LLPPPATPPPPPQ.

As to expression, expressed in fetal tissues.

The polypeptide is SMAD5 antisense gene protein 1 (SMAD5-AS1) (Homo sapiens (Human)).